Reading from the N-terminus, the 224-residue chain is Putative carbamate hydrolase RutD (224 aa).

Residues 14–115 (PVVVLISGLG…TVLVSVNGWL (102 aa)) form the AB hydrolase-1 domain.

The protein belongs to the AB hydrolase superfamily. Hydrolase RutD family.

It carries out the reaction carbamate + 2 H(+) = NH4(+) + CO2. Functionally, involved in pyrimidine catabolism. May facilitate the hydrolysis of carbamate, a reaction that can also occur spontaneously. This is Putative carbamate hydrolase RutD from Shigella dysenteriae serotype 1 (strain Sd197).